Consider the following 432-residue polypeptide: FAD-dependent monooxygenase pynG (432 aa).

FAD contacts are provided by glutamate 32, arginine 103, aspartate 315, and alanine 328.

It belongs to the paxM FAD-dependent monooxygenase family. The cofactor is FAD.

It functions in the pathway secondary metabolite biosynthesis. In terms of biological role, FAD-dependent monooxygenase; part of the gene cluster that mediates the biosynthesis of pyranonigrins, a family of antioxidative compounds. The first step of pyranonigrins biosynthesis is performed by the hybrid PKS-NRPS synthetase that condenses 6 malonyl-CoA units to an acetyl starter unit, to form a 1,3,5-trioxotetradecane-6,8-dienyl-ACP. The enoyl reductase (ER) domain of pynA is likely to be functional during the first two rounds of polyketide chain extension, to generate the saturated C-C bonds of the alkyl side chain. PynA subsequently forms the amide bond between the acyl chain and L-serine. Although pynA has a terminal reductase domain, it appears to require the thioesterase pynI for the release of the straight-chain intermediate from pynA via the formation of a tetramic acid pyranonigrin J. The methyltransferase pynC then coverts pyranonigrin J to pyranonigrin I via N-methylation. The FAD-dependent monooxygenase pynG catalyzes an epoxidation-mediated cyclization to form the dihydro-gamma-pyrone moiety, followed by pynD-catalyzed oxidation of the alcohol to the ketone and enolization to yield the characteristic tetramic acid-fused gamma-pyrone core of pyranonigrin H. Pyranonigrin H is substrate of pynH for dehydration-mediated exo-methylene formation from the serine side chain to produce pyranonigrin E, before the oxidase pynE reduces the exo-methylene of pyranonigrin E into a pendant methyl to form pyranonigrin G. The FAD-linked oxidoreductase pynB performs the reverse reaction and converts pyranonigrin G back to pyranonigrin E. The protein is FAD-dependent monooxygenase pynG of Aspergillus niger (strain ATCC MYA-4892 / CBS 513.88 / FGSC A1513).